The sequence spans 348 residues: 4-hydroxy-2-oxovalerate aldolase 3 (348 aa).

The Pyruvate carboxyltransferase domain maps to 8 to 260 (ITVHDMTLRD…ETGVDVWKIQ (253 aa)). 16 to 17 (RD) lines the substrate pocket. Mn(2+) is bound at residue D17. H20 (proton acceptor) is an active-site residue. Positions 170 and 199 each coordinate substrate. H199 and H201 together coordinate Mn(2+). Y290 is a binding site for substrate.

It belongs to the 4-hydroxy-2-oxovalerate aldolase family.

The catalysed reaction is (S)-4-hydroxy-2-oxopentanoate = acetaldehyde + pyruvate. This is 4-hydroxy-2-oxovalerate aldolase 3 from Burkholderia lata (strain ATCC 17760 / DSM 23089 / LMG 22485 / NCIMB 9086 / R18194 / 383).